Reading from the N-terminus, the 58-residue chain is Large ribosomal subunit protein bL32 (58 aa).

This sequence belongs to the bacterial ribosomal protein bL32 family.

The polypeptide is Large ribosomal subunit protein bL32 (Thermobifida fusca (strain YX)).